Here is a 404-residue protein sequence, read N- to C-terminus: Pectate lyase E (404 aa).

Residues 1–41 (MNNSRMSSVSTQKTTGRSALGTKSALAAIIATTMMVSVASA) form the signal peptide. Ca(2+) contacts are provided by Asp182 and Asp225. Arg278 is a catalytic residue.

Belongs to the polysaccharide lyase 1 family. PLBC subfamily. The cofactor is Ca(2+).

The protein localises to the secreted. It carries out the reaction Eliminative cleavage of (1-&gt;4)-alpha-D-galacturonan to give oligosaccharides with 4-deoxy-alpha-D-galact-4-enuronosyl groups at their non-reducing ends.. Its pathway is glycan metabolism; pectin degradation; 2-dehydro-3-deoxy-D-gluconate from pectin: step 2/5. Its function is as follows. Involved in maceration and soft-rotting of plant tissue. Pectate lyases have been implicated as pathogenicity factors which induce maceration or rotting of plant tissue. PelE is sufficient to induce these effects under laboratory conditions. The polypeptide is Pectate lyase E (pelE) (Dickeya chrysanthemi (Pectobacterium chrysanthemi)).